Here is a 147-residue protein sequence, read N- to C-terminus: Large ribosomal subunit protein uL15 (147 aa).

A disordered region spans residues 20-54 (GRGIGSGKGKTSGKGHKGQKARGTGKVHPWFEGGQ). The segment covering 30–44 (TSGKGHKGQKARGTG) has biased composition (basic residues).

This sequence belongs to the universal ribosomal protein uL15 family. As to quaternary structure, part of the 50S ribosomal subunit.

Its function is as follows. Binds to the 23S rRNA. The polypeptide is Large ribosomal subunit protein uL15 (Thermosipho africanus (strain TCF52B)).